Reading from the N-terminus, the 151-residue chain is 3-dehydroquinate dehydratase (151 aa).

Tyrosine 26 acts as the Proton acceptor in catalysis. Residues asparagine 75, histidine 81, and aspartate 88 each contribute to the substrate site. Residue histidine 101 is the Proton donor of the active site. Substrate-binding positions include 102 to 103 and arginine 112; that span reads LS.

The protein belongs to the type-II 3-dehydroquinase family. Homododecamer.

The catalysed reaction is 3-dehydroquinate = 3-dehydroshikimate + H2O. Its pathway is metabolic intermediate biosynthesis; chorismate biosynthesis; chorismate from D-erythrose 4-phosphate and phosphoenolpyruvate: step 3/7. Functionally, catalyzes a trans-dehydration via an enolate intermediate. In Shewanella sediminis (strain HAW-EB3), this protein is 3-dehydroquinate dehydratase.